The chain runs to 264 residues: Thymidylate synthase (264 aa).

DUMP is bound at residue arginine 21. Position 51 (histidine 51) interacts with (6R)-5,10-methylene-5,6,7,8-tetrahydrofolate. DUMP is bound at residue 126–127 (RR). Cysteine 146 functions as the Nucleophile in the catalytic mechanism. DUMP-binding positions include 166-169 (RSCD), asparagine 177, and 207-209 (HLY). Aspartate 169 is a binding site for (6R)-5,10-methylene-5,6,7,8-tetrahydrofolate. Position 263 (alanine 263) interacts with (6R)-5,10-methylene-5,6,7,8-tetrahydrofolate.

It belongs to the thymidylate synthase family. Bacterial-type ThyA subfamily. Homodimer.

It is found in the cytoplasm. It carries out the reaction dUMP + (6R)-5,10-methylene-5,6,7,8-tetrahydrofolate = 7,8-dihydrofolate + dTMP. The protein operates within pyrimidine metabolism; dTTP biosynthesis. In terms of biological role, catalyzes the reductive methylation of 2'-deoxyuridine-5'-monophosphate (dUMP) to 2'-deoxythymidine-5'-monophosphate (dTMP) while utilizing 5,10-methylenetetrahydrofolate (mTHF) as the methyl donor and reductant in the reaction, yielding dihydrofolate (DHF) as a by-product. This enzymatic reaction provides an intracellular de novo source of dTMP, an essential precursor for DNA biosynthesis. The polypeptide is Thymidylate synthase (Salmonella typhimurium (strain LT2 / SGSC1412 / ATCC 700720)).